Consider the following 652-residue polypeptide: Apicoplast pyruvate carrier 2 (652 aa).

At 1 to 45 the chain is on the cytoplasmic side; the sequence is MSAFPASPQPSAFPASPQPSAFPASPQPSASPVSPRHCVSPSSGT. Residues 1–53 form a disordered region; sequence MSAFPASPQPSAFPASPQPSAFPASPQPSASPVSPRHCVSPSSGTLPSSSSPS. 12 consecutive transmembrane segments (helical) span residues 46–66, 126–146, 167–187, 189–209, 212–232, 278–298, 345–365, 385–405, 417–437, 445–465, 467–487, and 515–535; these read LPSSSSPSVSSCALRGLSSSS, NLLPYLIGFIRNAQATSAVSY, GTTLEKKAGTKKTAFLGSAWM, LGLALCGVCTHDLSLFLIAYG, TALGCGVAYPVPLAATLKLSP, LPYLSSVASDTASASRLSSLN, LVDPERTSAADEAAADAAERQ, SCSASQVFASLVLTPQDICSS, LSWQSLFFVQLFWKVLPLYPE, AAPAPLDSLFASVVRRVPRAL, SASRPDPRALHAAADAWSLTG, and LWGYIGGGIGYMRSTVVMNAL. Residues 536–652 are Cytoplasmic-facing; the sequence is TAPCLFALST…LPYRFPTYSP (117 aa).

It belongs to the major facilitator superfamily. Interacts with apicoplast pyruvate carrier 1.

It is found in the plastid. The protein resides in the apicoplast. Its subcellular location is the membrane. In terms of biological role, along with apicoplast pyruvate carrier 1, forms apicoplast pyruvate carrier (APC) complex, which transports pyruvate into the apicoplast and may also transport amino acids like methionine, serine, glycine and tryptophan with low efficiency. Required for maintaining pyruvate-dependent metabolic activities in the apicoplast, such as synthesis of fatty acids, isopentenyl pyrophosphate (IPP), dimethylallyl pyrophosphate (DMAPP) and methylerythritol 4-phosphate (MEP). Required for maintaining the integrity of the apicoplast. Required for normal parasite growth. The polypeptide is Apicoplast pyruvate carrier 2 (Toxoplasma gondii).